The sequence spans 196 residues: Ankyrin repeat domain-containing protein 66 (196 aa).

ANK repeat units follow at residues Ser7 to Tyr37, Asn43 to Leu72, and Val76 to Ala105. Residues Glu152–Val196 are disordered. Over residues Arg187–Val196 the composition is skewed to polar residues.

This is Ankyrin repeat domain-containing protein 66 (ANKRD66) from Homo sapiens (Human).